We begin with the raw amino-acid sequence, 232 residues long: Proteasome subunit alpha type-2 (232 aa).

The protein belongs to the peptidase T1A family. The 26S proteasome consists of a 20S proteasome core and two 19S regulatory subunits. The 20S proteasome core is composed of 28 subunits that are arranged in four stacked rings, resulting in a barrel-shaped structure. The two end rings are each formed by seven alpha subunits, and the two central rings are each formed by seven beta subunits. The catalytic chamber with the active sites is on the inside of the barrel.

The protein resides in the cytoplasm. It localises to the nucleus. Its function is as follows. The proteasome is a multicatalytic proteinase complex which is characterized by its ability to cleave peptides with Arg, Phe, Tyr, Leu, and Glu adjacent to the leaving group at neutral or slightly basic pH. The proteasome has an ATP-dependent proteolytic activity. This chain is Proteasome subunit alpha type-2 (psmA2), found in Dictyostelium discoideum (Social amoeba).